The primary structure comprises 495 residues: Dihydrolipoyl dehydrogenase, mitochondrial (495 aa).

Residues 59-68, Lys77, and 169-171 contribute to the FAD site; these read EKNATLGGTC and SGS. Cysteines 68 and 73 form a disulfide. Residues 206–213, Glu229, Val264, and Gly299 contribute to the NAD(+) site; that span reads GAGVIGLE. Residues Asp340 and 346-349 each bind FAD; that span reads MLAH. Catalysis depends on His472, which acts as the Proton acceptor.

It belongs to the class-I pyridine nucleotide-disulfide oxidoreductase family. FAD is required as a cofactor.

It is found in the mitochondrion matrix. It carries out the reaction N(6)-[(R)-dihydrolipoyl]-L-lysyl-[protein] + NAD(+) = N(6)-[(R)-lipoyl]-L-lysyl-[protein] + NADH + H(+). This is Dihydrolipoyl dehydrogenase, mitochondrial (dld-1) from Caenorhabditis elegans.